Here is a 134-residue protein sequence, read N- to C-terminus: MALKIRLARAGSKKRPYYHVVVADVRAPRDGRFIETVGSWNPVLPKDAERVKLDAERIQHWIAQGAQPTDRVLRFLDQAGIAKRPSRNNPTKGEPGKKAQERLALAKQAEEEASAKAAEAAAAAAAPAEEAASE.

The tract at residues 79–134 (AGIAKRPSRNNPTKGEPGKKAQERLALAKQAEEEASAKAAEAAAAAAAPAEEAASE) is disordered. Over residues 115–134 (AKAAEAAAAAAAPAEEAASE) the composition is skewed to low complexity.

This sequence belongs to the bacterial ribosomal protein bS16 family.

This Brucella abortus (strain S19) protein is Small ribosomal subunit protein bS16.